The following is a 213-amino-acid chain: MGVEVCVKAAVGHPDTLGDCPFSQRVLLTLEEKKVPYEMKLIDVQNKPDWFLKISPEGKVPVFNGGDGKWIPDSDVITQVIEEKYPTPSLVTPPEYASVGSKIFSCFTTFLKSKDPNDGSEKALLTELQALEEHLKAHGPFINGQNISAADLSLAPKLYHLQVALEHFKGWKIPEDLTNVHAYTEALFSRESFIKTKAAKEHLIAGWAPKVNA.

Glutathione-binding residues include Lys-8 and Asp-19. 2 residues coordinate L-ascorbate: Lys-8 and Asp-19. In terms of domain architecture, GST N-terminal spans Ala-10–Ser-89. Residue Cys-20 is the Nucleophile of the active site. Glutathione contacts are provided by Lys-47, Val-60, Ser-74, His-160, and Trp-207. Residues Asp-73 to Ala-213 enclose the GST C-terminal domain. Lys-210 lines the L-ascorbate pocket.

This sequence belongs to the GST superfamily. DHAR family. As to quaternary structure, monomer.

The protein localises to the cytoplasm. Its subcellular location is the cytosol. The enzyme catalyses RX + glutathione = an S-substituted glutathione + a halide anion + H(+). It carries out the reaction L-dehydroascorbate + 2 glutathione = glutathione disulfide + L-ascorbate. Involved in ascorbate homeostasis. Maintains redox pools of ascorbate by recycling dihydroascorbate (DHA) to ascorbate. Involved in scavenging reactive oxygen species (ROS) under oxidative stresses. Possesses dehydroascorbate reductase (DHAR) activity in vitro. May function via a ping-pong reaction mechanism with an electron transfer at the active site. Possesses chaperone-like activity in vitro. In Oryza sativa subsp. japonica (Rice), this protein is Probable glutathione S-transferase DHAR1, cytosolic.